A 178-amino-acid polypeptide reads, in one-letter code: ATP-dependent protease subunit HslV (178 aa).

Thr-7 is a catalytic residue. Na(+) contacts are provided by Gly-162, Cys-165, and Thr-168.

It belongs to the peptidase T1B family. HslV subfamily. In terms of assembly, a double ring-shaped homohexamer of HslV is capped on each side by a ring-shaped HslU homohexamer. The assembly of the HslU/HslV complex is dependent on binding of ATP.

Its subcellular location is the cytoplasm. The catalysed reaction is ATP-dependent cleavage of peptide bonds with broad specificity.. With respect to regulation, allosterically activated by HslU binding. Its function is as follows. Protease subunit of a proteasome-like degradation complex believed to be a general protein degrading machinery. The chain is ATP-dependent protease subunit HslV from Burkholderia cenocepacia (strain ATCC BAA-245 / DSM 16553 / LMG 16656 / NCTC 13227 / J2315 / CF5610) (Burkholderia cepacia (strain J2315)).